The primary structure comprises 85 residues: UPF0291 protein SP_1473 (85 aa).

The disordered stretch occupies residues 62–85 (TPEKLRQVQREKGLHGRSLDDPNS).

This sequence belongs to the UPF0291 family.

The protein localises to the cytoplasm. The sequence is that of UPF0291 protein SP_1473 from Streptococcus pneumoniae serotype 4 (strain ATCC BAA-334 / TIGR4).